The chain runs to 593 residues: Probable tripeptidyl-peptidase SED3 (593 aa).

The N-terminal stretch at 1–18 (MLLRWHSVIPLFLAMTVA) is a signal peptide. A propeptide spans 19–198 (FPNTYRTVVE…NLQAIYLSTN (180 aa)) (removed in mature form). 3 N-linked (GlcNAc...) asparagine glycosylation sites follow: N204, N261, and N275. The 387-residue stretch at 206-592 (TITPRCLREL…RILAKIVQHM (387 aa)) folds into the Peptidase S53 domain. Residues E282 and D286 each act as charge relay system in the active site. Residue N295 is glycosylated (N-linked (GlcNAc...) asparagine). S496 acts as the Charge relay system in catalysis. Positions 538 and 539 each coordinate Ca(2+). N-linked (GlcNAc...) asparagine glycosylation is found at N554 and N566. Residues G570 and D572 each contribute to the Ca(2+) site.

Requires Ca(2+) as cofactor.

It is found in the secreted. The protein resides in the extracellular space. It carries out the reaction Release of an N-terminal tripeptide from a polypeptide.. Functionally, secreted tripeptidyl-peptidase which degrades proteins at acidic pHs and is involved in virulence. The sequence is that of Probable tripeptidyl-peptidase SED3 (SED3) from Arthroderma benhamiae (strain ATCC MYA-4681 / CBS 112371) (Trichophyton mentagrophytes).